Reading from the N-terminus, the 488-residue chain is Cardiolipin synthase 2 (488 aa).

2 helical membrane passes run Ile8–Ile28 and Ile39–Leu59. PLD phosphodiesterase domains follow at residues Met223–Tyr250 and Asp401–Ser428. Active-site residues include His228, Lys230, Asp235, His406, Lys408, and Asp413.

Belongs to the phospholipase D family. Cardiolipin synthase subfamily.

It localises to the cell membrane. The enzyme catalyses 2 a 1,2-diacyl-sn-glycero-3-phospho-(1'-sn-glycerol) = a cardiolipin + glycerol. Functionally, catalyzes the reversible phosphatidyl group transfer from one phosphatidylglycerol molecule to another to form cardiolipin (CL) (diphosphatidylglycerol) and glycerol. This Staphylococcus epidermidis (strain ATCC 35984 / DSM 28319 / BCRC 17069 / CCUG 31568 / BM 3577 / RP62A) protein is Cardiolipin synthase 2 (cls2).